The sequence spans 833 residues: F1 capsule-anchoring protein (833 aa).

The signal sequence occupies residues 1–25 (MRYSKLFLCAGLTLATLPCWGRAYT). A disulfide bridge links C807 with C829.

This sequence belongs to the fimbrial export usher family.

It is found in the cell outer membrane. A probable role in capsular biogenesis. It is likely that the caf1A molecule binds F1 antigen subunits during the extracellular secretion process. This is F1 capsule-anchoring protein (caf1A) from Yersinia pestis.